The sequence spans 303 residues: Aspartate carbamoyltransferase catalytic subunit (303 aa).

Carbamoyl phosphate is bound by residues R54 and T55. K82 is a binding site for L-aspartate. Positions 104, 132, and 135 each coordinate carbamoyl phosphate. L-aspartate is bound by residues R165 and R221. G261 and P262 together coordinate carbamoyl phosphate.

The protein belongs to the aspartate/ornithine carbamoyltransferase superfamily. ATCase family. Heterododecamer (2C3:3R2) of six catalytic PyrB chains organized as two trimers (C3), and six regulatory PyrI chains organized as three dimers (R2).

It catalyses the reaction carbamoyl phosphate + L-aspartate = N-carbamoyl-L-aspartate + phosphate + H(+). It participates in pyrimidine metabolism; UMP biosynthesis via de novo pathway; (S)-dihydroorotate from bicarbonate: step 2/3. Catalyzes the condensation of carbamoyl phosphate and aspartate to form carbamoyl aspartate and inorganic phosphate, the committed step in the de novo pyrimidine nucleotide biosynthesis pathway. This is Aspartate carbamoyltransferase catalytic subunit from Koribacter versatilis (strain Ellin345).